The following is a 419-amino-acid chain: Serine hydroxymethyltransferase (419 aa).

Residues L119 and G123–L125 each bind (6S)-5,6,7,8-tetrahydrofolate. At K228 the chain carries N6-(pyridoxal phosphate)lysine.

Belongs to the SHMT family. In terms of assembly, homodimer. The cofactor is pyridoxal 5'-phosphate.

It is found in the cytoplasm. The enzyme catalyses (6R)-5,10-methylene-5,6,7,8-tetrahydrofolate + glycine + H2O = (6S)-5,6,7,8-tetrahydrofolate + L-serine. The protein operates within one-carbon metabolism; tetrahydrofolate interconversion. Its pathway is amino-acid biosynthesis; glycine biosynthesis; glycine from L-serine: step 1/1. In terms of biological role, catalyzes the reversible interconversion of serine and glycine with tetrahydrofolate (THF) serving as the one-carbon carrier. This reaction serves as the major source of one-carbon groups required for the biosynthesis of purines, thymidylate, methionine, and other important biomolecules. Also exhibits THF-independent aldolase activity toward beta-hydroxyamino acids, producing glycine and aldehydes, via a retro-aldol mechanism. This Desulfosudis oleivorans (strain DSM 6200 / JCM 39069 / Hxd3) (Desulfococcus oleovorans) protein is Serine hydroxymethyltransferase.